We begin with the raw amino-acid sequence, 228 residues long: UPF0173 metal-dependent hydrolase LMOf2365_1599 (228 aa).

The protein belongs to the UPF0173 family.

The chain is UPF0173 metal-dependent hydrolase LMOf2365_1599 from Listeria monocytogenes serotype 4b (strain F2365).